The following is a 164-amino-acid chain: NADH-quinone oxidoreductase subunit I (164 aa).

4Fe-4S ferredoxin-type domains follow at residues 55-84 (RRYEGGEERCVACKLCEAICPAQAIYIEID) and 95-124 (KVYDIDLFKCIYCGLCEEACPVEAIVMGPY). 8 residues coordinate [4Fe-4S] cluster: cysteine 64, cysteine 67, cysteine 70, cysteine 74, cysteine 104, cysteine 107, cysteine 110, and cysteine 114.

This sequence belongs to the complex I 23 kDa subunit family. NDH-1 is composed of 14 different subunits. Subunits NuoA, H, J, K, L, M, N constitute the membrane sector of the complex. It depends on [4Fe-4S] cluster as a cofactor.

Its subcellular location is the cell inner membrane. It carries out the reaction a quinone + NADH + 5 H(+)(in) = a quinol + NAD(+) + 4 H(+)(out). Its function is as follows. NDH-1 shuttles electrons from NADH, via FMN and iron-sulfur (Fe-S) centers, to quinones in the respiratory chain. The immediate electron acceptor for the enzyme in this species is believed to be ubiquinone. Couples the redox reaction to proton translocation (for every two electrons transferred, four hydrogen ions are translocated across the cytoplasmic membrane), and thus conserves the redox energy in a proton gradient. The protein is NADH-quinone oxidoreductase subunit I of Magnetococcus marinus (strain ATCC BAA-1437 / JCM 17883 / MC-1).